The sequence spans 132 residues: Small ribosomal subunit protein uS8c (132 aa).

It belongs to the universal ribosomal protein uS8 family. As to quaternary structure, part of the 30S ribosomal subunit.

Its subcellular location is the plastid. The protein resides in the chloroplast. In terms of biological role, one of the primary rRNA binding proteins, it binds directly to 16S rRNA central domain where it helps coordinate assembly of the platform of the 30S subunit. This Psilotum nudum (Whisk fern) protein is Small ribosomal subunit protein uS8c (rps8).